The primary structure comprises 246 residues: Probable phosphatase Tola_0828 (246 aa).

His8, His10, His16, His41, Glu74, His102, His132, Asp193, and His195 together coordinate Zn(2+).

The protein belongs to the PHP family. Requires Zn(2+) as cofactor.

The sequence is that of Probable phosphatase Tola_0828 from Tolumonas auensis (strain DSM 9187 / NBRC 110442 / TA 4).